Reading from the N-terminus, the 151-residue chain is Ribosome maturation factor RimP (151 aa).

It belongs to the RimP family.

The protein localises to the cytoplasm. Required for maturation of 30S ribosomal subunits. The chain is Ribosome maturation factor RimP from Thermoanaerobacter pseudethanolicus (strain ATCC 33223 / 39E) (Clostridium thermohydrosulfuricum).